A 562-amino-acid polypeptide reads, in one-letter code: MKETLSSKVPTTRTVGVTFDSVSESKSKLKSGSVQGTTATATATGPPSPPSSYVIKCLLKTARFMWQVTTIPAKIGDTLGTLYRYAQDSVDTFLCVAGKARRKERDGDQNSTDTKLYLEESVLERKLPEADLKALVDLPAGLDYNEWLASHTLALFEHVNLVYGTISEFCTQSGCADMTGPGNRTYLWFDEKGKKTRVAAPQYIDYVMTFTQKTVSDESIFPTKYANEFPGSFESIARKILRLQFHVIAHLYAAHFREIALLGLHTHLNLTFAHLTALHRRFNLIDEKETDVLRDLEVALRLTDDTSGQDSSSSVHEHSSSSSSPPVQHQQHQHQQQHNNSSSTSNSTSPAEALHVNSQSNSNSHSNSSNSHTTTASASASLIDGDSAAPPICTQPEAGAGCKPAGSSGLLGGILGDLTSGEFGDTTRYCTSAVPQAAASSSASAAGPGADGAASAALNNGAGALHLNFSNNNNNNHNLNHLNHHHHHHHHQHHHQHHPHGHHGHQGHQGHQGHHQAPASTTVPHSGLIQCNAAGAVGASAGGGGNAVSAATGGATSASSTA.

The disordered stretch occupies residues 30–50 (KSGSVQGTTATATATGPPSPP). Residues 31–45 (SGSVQGTTATATATG) are compositionally biased toward low complexity. Cys-170, Cys-175, His-250, and His-255 together coordinate Zn(2+). 3 disordered regions span residues 304-378 (DDTS…TASA), 468-523 (NFSN…STTV), and 538-562 (GASA…SSTA). 3 stretches are compositionally biased toward low complexity: residues 305-349 (DTSG…NSTS), 357-378 (NSQS…TASA), and 471-481 (NNNNNNHNLNH). Over residues 482 to 514 (LNHHHHHHHHQHHHQHHPHGHHGHQGHQGHQGH) the composition is skewed to basic residues. The segment covering 547 to 562 (AVSAATGGATSASSTA) has biased composition (low complexity).

It belongs to the MOB1/phocein family. As to quaternary structure, interacts with and activates trc, also interacts with wts.

The protein localises to the cytoplasm. It is found in the nucleus. Its function is as follows. Required for the normal morphogenesis of a variety of polarized outgrowths including epidermal hairs, bristles, arista laterals, and dendrites. This Drosophila pseudoobscura pseudoobscura (Fruit fly) protein is MOB kinase activator-like 2.